The sequence spans 89 residues: Acylphosphatase (89 aa).

The Acylphosphatase-like domain occupies 4–89; sequence CVRCLIAGRV…IPEIQMFEVR (86 aa). Active-site residues include Arg19 and Asn37.

The protein belongs to the acylphosphatase family.

The enzyme catalyses an acyl phosphate + H2O = a carboxylate + phosphate + H(+). The protein is Acylphosphatase (acyP) of Nitrosococcus oceani (strain ATCC 19707 / BCRC 17464 / JCM 30415 / NCIMB 11848 / C-107).